The sequence spans 133 residues: Ribonucleases P/MRP protein subunit POP8 (133 aa).

Component of nuclear RNase P and RNase MRP complexes. RNase P consists of an RNA moiety and at least 9 protein subunits including POP1, POP3, POP4, POP5, POP6, POP7, POP8, RPP1 and RPR2. RNase MRP complex consists of an RNA moiety and at least 10 protein subunits including POP1, POP3, POP4, POP5, POP6, POP7, POP8, RMP1, RPP1 and SNM1, many of which are shared with the RNase P complex.

Its subcellular location is the nucleus. It catalyses the reaction Endonucleolytic cleavage of RNA, removing 5'-extranucleotides from tRNA precursor.. Functionally, component of ribonuclease P, a protein complex that generates mature tRNA molecules by cleaving their 5'-ends. Also a component of RNase MRP, which cleaves pre-rRNA sequences. The chain is Ribonucleases P/MRP protein subunit POP8 (POP8) from Saccharomyces cerevisiae (strain ATCC 204508 / S288c) (Baker's yeast).